Consider the following 323-residue polypeptide: V-type ATP synthase subunit C (323 aa).

Belongs to the V-ATPase V0D/AC39 subunit family.

Its function is as follows. Produces ATP from ADP in the presence of a proton gradient across the membrane. This chain is V-type ATP synthase subunit C (atpC), found in Thermus thermophilus (strain ATCC 27634 / DSM 579 / HB8).